The sequence spans 502 residues: Ubiquitin-associated protein 1 (502 aa).

Residues Met1–Gly95 form an interaction with ESCRT-I region. The UMA domain maps to Leu17–Ile63. Basic and acidic residues predominate over residues Ala86–Ser100. The tract at residues Ala86–Ile117 is disordered. Positions Met102–Thr112 are enriched in polar residues. Phosphoserine is present on residues Ser146, Ser205, and Ser289. The interaction with PTPN23 stretch occupies residues Val260–Thr290. UBA domains follow at residues Ser389 to His430 and Gln451 to Arg498.

Component of an ESCRT-I complex (endosomal sorting complex required for transport I) which consists of TSG101, VPS28, VPS37A and UBAP1 in a 1:1:1:1 stoichiometry. Interacts with PTPN23. Interacts (via UBA domains) with ubiquitinated proteins. Ubiquitous. Highly expressed in heart, brain, placenta, lung, liver, skeletal muscle and pancreas.

It localises to the cytoplasm. The protein localises to the cytosol. Its subcellular location is the endosome. In terms of biological role, component of the ESCRT-I complex, a regulator of vesicular trafficking process. Binds to ubiquitinated cargo proteins and is required for the sorting of endocytic ubiquitinated cargos into multivesicular bodies (MVBs). Plays a role in the proteasomal degradation of ubiquitinated cell-surface proteins, such as EGFR and BST2. This Homo sapiens (Human) protein is Ubiquitin-associated protein 1.